We begin with the raw amino-acid sequence, 181 residues long: ATP-dependent protease subunit HslV (181 aa).

Threonine 7 is a catalytic residue. 3 residues coordinate Na(+): alanine 162, cysteine 165, and threonine 168.

The protein belongs to the peptidase T1B family. HslV subfamily. As to quaternary structure, a double ring-shaped homohexamer of HslV is capped on each side by a ring-shaped HslU homohexamer. The assembly of the HslU/HslV complex is dependent on binding of ATP.

The protein localises to the cytoplasm. It catalyses the reaction ATP-dependent cleavage of peptide bonds with broad specificity.. Its activity is regulated as follows. Allosterically activated by HslU binding. Its function is as follows. Protease subunit of a proteasome-like degradation complex believed to be a general protein degrading machinery. This is ATP-dependent protease subunit HslV from Coxiella burnetii (strain RSA 331 / Henzerling II).